A 67-amino-acid chain; its full sequence is Sec-independent protein translocase protein TatA (67 aa).

A helical membrane pass occupies residues 1–21 (MMPGPFELIVILVIVLLLFGG).

It belongs to the TatA/E family. The Tat system comprises two distinct complexes: a TatABC complex, containing multiple copies of TatA, TatB and TatC subunits, and a separate TatA complex, containing only TatA subunits. Substrates initially bind to the TatABC complex, which probably triggers association of the separate TatA complex to form the active translocon.

It is found in the cell inner membrane. Functionally, part of the twin-arginine translocation (Tat) system that transports large folded proteins containing a characteristic twin-arginine motif in their signal peptide across membranes. TatA could form the protein-conducting channel of the Tat system. The sequence is that of Sec-independent protein translocase protein TatA from Ruthia magnifica subsp. Calyptogena magnifica.